A 118-amino-acid polypeptide reads, in one-letter code: Fluoride-specific ion channel FluC 1 (118 aa).

The next 4 membrane-spanning stretches (helical) occupy residues 5–25, 39–59, 61–81, and 98–118; these read FLLV…ISIF, FFIN…ALGP, WQLF…TFKV, and YVGL…MLGV. Na(+)-binding residues include Gly71 and Thr74.

Belongs to the fluoride channel Fluc/FEX (TC 1.A.43) family.

It is found in the cell membrane. The catalysed reaction is fluoride(in) = fluoride(out). Its activity is regulated as follows. Na(+) is not transported, but it plays an essential structural role and its presence is essential for fluoride channel function. In terms of biological role, fluoride-specific ion channel. Important for reducing fluoride concentration in the cell, thus reducing its toxicity. The sequence is that of Fluoride-specific ion channel FluC 1 from Listeria innocua serovar 6a (strain ATCC BAA-680 / CLIP 11262).